A 173-amino-acid chain; its full sequence is RNA pyrophosphohydrolase (173 aa).

Residues 6 to 149 form the Nudix hydrolase domain; it reads GFRANVGIII…KRDVYRKVMK (144 aa). Residues 38–59 carry the Nudix box motif; the sequence is GGVDEGESAEEAMYRELYEEVG.

Belongs to the Nudix hydrolase family. RppH subfamily. A divalent metal cation serves as cofactor.

Functionally, accelerates the degradation of transcripts by removing pyrophosphate from the 5'-end of triphosphorylated RNA, leading to a more labile monophosphorylated state that can stimulate subsequent ribonuclease cleavage. This is RNA pyrophosphohydrolase from Shewanella piezotolerans (strain WP3 / JCM 13877).